Consider the following 340-residue polypeptide: Biotin synthase (340 aa).

Residues 53–280 (SAIQLSSLLS…LARVRLSAGR (228 aa)) form the Radical SAM core domain. Positions 68, 72, and 75 each coordinate [4Fe-4S] cluster. [2Fe-2S] cluster contacts are provided by cysteine 112, cysteine 143, cysteine 203, and arginine 275.

This sequence belongs to the radical SAM superfamily. Biotin synthase family. Homodimer. [4Fe-4S] cluster is required as a cofactor. The cofactor is [2Fe-2S] cluster.

It carries out the reaction (4R,5S)-dethiobiotin + (sulfur carrier)-SH + 2 reduced [2Fe-2S]-[ferredoxin] + 2 S-adenosyl-L-methionine = (sulfur carrier)-H + biotin + 2 5'-deoxyadenosine + 2 L-methionine + 2 oxidized [2Fe-2S]-[ferredoxin]. The protein operates within cofactor biosynthesis; biotin biosynthesis; biotin from 7,8-diaminononanoate: step 2/2. Catalyzes the conversion of dethiobiotin (DTB) to biotin by the insertion of a sulfur atom into dethiobiotin via a radical-based mechanism. This Bordetella petrii (strain ATCC BAA-461 / DSM 12804 / CCUG 43448) protein is Biotin synthase.